Here is a 429-residue protein sequence, read N- to C-terminus: Serine hydroxymethyltransferase (429 aa).

(6S)-5,6,7,8-tetrahydrofolate is bound by residues Leu126 and 130-132 (GHL). The residue at position 235 (Lys235) is an N6-(pyridoxal phosphate)lysine. 359-361 (SPF) serves as a coordination point for (6S)-5,6,7,8-tetrahydrofolate.

It belongs to the SHMT family. In terms of assembly, homodimer. Pyridoxal 5'-phosphate is required as a cofactor.

The protein resides in the cytoplasm. The enzyme catalyses (6R)-5,10-methylene-5,6,7,8-tetrahydrofolate + glycine + H2O = (6S)-5,6,7,8-tetrahydrofolate + L-serine. The protein operates within one-carbon metabolism; tetrahydrofolate interconversion. Its pathway is amino-acid biosynthesis; glycine biosynthesis; glycine from L-serine: step 1/1. Catalyzes the reversible interconversion of serine and glycine with tetrahydrofolate (THF) serving as the one-carbon carrier. This reaction serves as the major source of one-carbon groups required for the biosynthesis of purines, thymidylate, methionine, and other important biomolecules. Also exhibits THF-independent aldolase activity toward beta-hydroxyamino acids, producing glycine and aldehydes, via a retro-aldol mechanism. The sequence is that of Serine hydroxymethyltransferase from Parasynechococcus marenigrum (strain WH8102).